The following is a 240-amino-acid chain: Probable septum site-determining protein MinC (240 aa).

It belongs to the MinC family. Interacts with MinD and FtsZ.

Cell division inhibitor that blocks the formation of polar Z ring septums. Rapidly oscillates between the poles of the cell to destabilize FtsZ filaments that have formed before they mature into polar Z rings. Prevents FtsZ polymerization. This is Probable septum site-determining protein MinC from Acinetobacter baumannii (strain AYE).